We begin with the raw amino-acid sequence, 1535 residues long: CLIP-associating protein 1 (1535 aa).

HEAT repeat units lie at residues 87 to 124 and 163 to 200; these read AQIGTVLPSLIDRLGDAKDSVREQDQTLLLKIMDQAAN and LTLSKIVPHICNLLGDPNSQVRDAAINSLVEIYRHVGE. Residues 237–290 are disordered; the sequence is NEKNFDDEDSVDGNRPSSASSSSSKAPSSSRRNVNLGTTRRLMSSSLGSKSSAA. Ser-246 is subject to Phosphoserine. Residues 252 to 266 show a composition bias toward low complexity; sequence PSSASSSSSKAPSSS. Residues 267 to 279 show a composition bias toward polar residues; it reads RRNVNLGTTRRLM. The span at 280-290 shows a compositional bias: low complexity; the sequence is SSSLGSKSSAA. 2 HEAT repeats span residues 405 to 440 and 441 to 477; these read HGAEAIMPTIFNLIPNSAKIMATSGVVAVRLIIRHT and HIPRLIPVITSNCTSKSVAVRRRCFEFLDLLLQEWQT. Disordered regions lie at residues 543–600 and 612–782; these read SDSI…RSRS and SKVS…GRIP. Phosphoserine is present on residues Ser-545, Ser-548, Ser-558, Ser-559, and Ser-568. Residues 548–567 are compositionally biased toward low complexity; the sequence is SLPQSDRSSSSSQESLNRPL. A compositionally biased stretch (low complexity) spans 579-594; sequence SRGSTVSTKSVSTTGS. The residue at position 600 (Ser-600) is a Phosphoserine. The span at 612–633 shows a compositional bias: low complexity; sequence SKVSSSSGSPAFSSAAALPPGS. Phosphoserine is present on residues Ser-636, Ser-646, Ser-647, and Ser-649. A compositionally biased stretch (polar residues) spans 645–658; the sequence is QSSGSTTNVASTPD. The residue at position 656 (Thr-656) is a Phosphothreonine. Positions 662 to 782 are interaction with microtubules, MAPRE1 and MAPRE3; the sequence is RSRAKVVSQS…FGLGQSGRIP (121 aa). The span at 673 to 695 shows a compositional bias: low complexity; sequence RSRSANPAGAGSRSSSPGKLLGS. Ser-684, Ser-688, Ser-695, and Ser-702 each carry phosphoserine. Position 708 is a phosphothreonine (Thr-708). Ser-711 carries the phosphoserine modification. Residues 721–730 show a composition bias toward polar residues; it reads QGCSRETSPN. 3 positions are modified to phosphoserine: Ser-784, Ser-794, and Ser-820. Residues 971–1008 form an HEAT 5 repeat; that stretch reads QQFNILMRFIVDQTQTPNLKVKVAILKYIESLARQMDP. Residues 1078–1157 are disordered; that stretch reads LKNSSNTGVG…APSHKTLRRS (80 aa). The span at 1079–1094 shows a compositional bias: polar residues; it reads KNSSNTGVGSPSNTIG. At Ser-1088 the chain carries Phosphoserine. Thr-1092 and Thr-1096 each carry phosphothreonine. Residues 1103 to 1112 are compositionally biased toward low complexity; it reads SRTSPLTSPT. Ser-1110, Phe-1139, and Ser-1193 each carry phosphoserine. The span at 1200 to 1213 shows a compositional bias: basic and acidic residues; sequence PIKRDGKKDCDIVS. Disordered regions lie at residues 1200 to 1233 and 1245 to 1266; these read PIKRDGKKDCDIVSRDGGAASPATEGRGGSEIEG and LNTQPPRAFPGPRAREYNPYPY. At Ser-1220 the chain carries Phosphoserine. The segment at 1251–1535 is interaction with CLIP2 and RSN; that stretch reads RAFPGPRARE…SSSSDVSTHS (285 aa). Residues 1251–1535 are interaction with PHLDB2; the sequence is RAFPGPRARE…SSSSDVSTHS (285 aa). A localization to kinetochores region spans residues 1253–1535; the sequence is FPGPRAREYN…SSSSDVSTHS (283 aa). Residues 1296-1327 adopt a coiled-coil conformation; sequence DHSDLVADLLKELSNHNERVEERKGALLELLK. HEAT repeat units follow at residues 1339 to 1376 and 1457 to 1494; these read EHFKTILLLLLETLGDKDHSIRALALRVLREILRNQPA and QLLVDIIPGLLQGYDNTESSVRKASVFCLVAIYSVIGE.

The protein belongs to the CLASP family. Interacts with ERC1, MAPRE1, MAPRE3, microtubules, and PHLDB2. The interaction with ERC1 may be mediated by PHLDB2. Interacts with GCC2; recruits CLASP1 to Golgi membranes. Interacts with CLIP2 and RSN. Interacts with MACF1. Interacts with mtcl2 and MTCL1. Highly expressed in brain and heart and at lower levels in kidney, lung, skeletal muscle and testis.

The protein localises to the cytoplasm. Its subcellular location is the cytoskeleton. The protein resides in the microtubule organizing center. It localises to the centrosome. It is found in the chromosome. The protein localises to the centromere. Its subcellular location is the kinetochore. The protein resides in the spindle. It localises to the golgi apparatus. It is found in the trans-Golgi network. In terms of biological role, microtubule plus-end tracking protein that promotes the stabilization of dynamic microtubules. Involved in the nucleation of noncentrosomal microtubules originating from the trans-Golgi network (TGN). Required for the polarization of the cytoplasmic microtubule arrays in migrating cells towards the leading edge of the cell. May act at the cell cortex to enhance the frequency of rescue of depolymerizing microtubules by attaching their plus-ends to cortical platforms composed of ERC1 and PHLDB2. This cortical microtubule stabilizing activity is regulated at least in part by phosphatidylinositol 3-kinase signaling. Also performs a similar stabilizing function at the kinetochore which is essential for the bipolar alignment of chromosomes on the mitotic spindle. This Mus musculus (Mouse) protein is CLIP-associating protein 1 (Clasp1).